Reading from the N-terminus, the 310-residue chain is Protease HtpX homolog (310 aa).

2 consecutive transmembrane segments (helical) span residues 16 to 36 (NAVLTTYCAIFAFIGLLVDAI) and 55 to 75 (IFPTITIVMFVVAFVIILVCI). A Zn(2+)-binding site is contributed by histidine 166. Residue glutamate 167 is part of the active site. Histidine 170 is a Zn(2+) binding site. 2 helical membrane-spanning segments follow: residues 182-202 (VGILSNIMLLVANFSVYFFMG) and 214-234 (MILWVLQIILPFLTLLLQMYL). A Zn(2+)-binding site is contributed by glutamate 239.

It belongs to the peptidase M48B family. Requires Zn(2+) as cofactor.

The protein localises to the cell inner membrane. This is Protease HtpX homolog from Helicobacter pylori (strain J99 / ATCC 700824) (Campylobacter pylori J99).